The sequence spans 91 residues: HssA/B-like protein 24 (91 aa).

It belongs to the hssA/B family.

In Dictyostelium discoideum (Social amoeba), this protein is HssA/B-like protein 24 (hssl24).